The following is a 186-amino-acid chain: ATP synthase subunit delta (186 aa).

It belongs to the ATPase delta chain family. F-type ATPases have 2 components, F(1) - the catalytic core - and F(0) - the membrane proton channel. F(1) has five subunits: alpha(3), beta(3), gamma(1), delta(1), epsilon(1). F(0) has three main subunits: a(1), b(2) and c(10-14). The alpha and beta chains form an alternating ring which encloses part of the gamma chain. F(1) is attached to F(0) by a central stalk formed by the gamma and epsilon chains, while a peripheral stalk is formed by the delta and b chains.

The protein resides in the cell inner membrane. F(1)F(0) ATP synthase produces ATP from ADP in the presence of a proton or sodium gradient. F-type ATPases consist of two structural domains, F(1) containing the extramembraneous catalytic core and F(0) containing the membrane proton channel, linked together by a central stalk and a peripheral stalk. During catalysis, ATP synthesis in the catalytic domain of F(1) is coupled via a rotary mechanism of the central stalk subunits to proton translocation. Its function is as follows. This protein is part of the stalk that links CF(0) to CF(1). It either transmits conformational changes from CF(0) to CF(1) or is implicated in proton conduction. This is ATP synthase subunit delta from Chelativorans sp. (strain BNC1).